A 149-amino-acid polypeptide reads, in one-letter code: Large ribosomal subunit protein eL19 (149 aa).

Residues 45–130 (VDEGAIQAKD…RDLYDKAGGG (86 aa)) are disordered. The segment covering 58 to 85 (NSRGRARERQKKRAYGHQKGAGSRKGKA) has biased composition (basic residues). Residues 90–113 (NSKEDWESRIRAQRTKLRELRDEG) show a composition bias toward basic and acidic residues.

This sequence belongs to the eukaryotic ribosomal protein eL19 family. As to quaternary structure, part of the 50S ribosomal subunit.

Its function is as follows. Binds to the 23S rRNA. Located at the polypeptide exit tunnel on the outside of the subunit. This Haloarcula marismortui (strain ATCC 43049 / DSM 3752 / JCM 8966 / VKM B-1809) (Halobacterium marismortui) protein is Large ribosomal subunit protein eL19.